We begin with the raw amino-acid sequence, 707 residues long: Ribosomal RNA large subunit methyltransferase K/L (707 aa).

A THUMP domain is found at 44 to 155 (VIYNLCLWSR…NDILTVSFDL (112 aa)).

The protein belongs to the methyltransferase superfamily. RlmKL family.

It is found in the cytoplasm. It carries out the reaction guanosine(2445) in 23S rRNA + S-adenosyl-L-methionine = N(2)-methylguanosine(2445) in 23S rRNA + S-adenosyl-L-homocysteine + H(+). The enzyme catalyses guanosine(2069) in 23S rRNA + S-adenosyl-L-methionine = N(2)-methylguanosine(2069) in 23S rRNA + S-adenosyl-L-homocysteine + H(+). In terms of biological role, specifically methylates the guanine in position 2445 (m2G2445) and the guanine in position 2069 (m7G2069) of 23S rRNA. This is Ribosomal RNA large subunit methyltransferase K/L from Legionella pneumophila (strain Corby).